Here is a 258-residue protein sequence, read N- to C-terminus: UPF0246 protein YPK_3600 (258 aa).

This sequence belongs to the UPF0246 family.

The chain is UPF0246 protein YPK_3600 from Yersinia pseudotuberculosis serotype O:3 (strain YPIII).